Here is a 307-residue protein sequence, read N- to C-terminus: Alpha N-terminal protein methyltransferase 1 (307 aa).

The span at Glu-38–Gln-54 shows a compositional bias: low complexity. The interval Glu-38–Gly-60 is disordered. S-adenosyl-L-methionine is bound by residues Gly-123, Arg-128, Glu-145–Val-147, Leu-179–Gln-180, and Gln-195.

Belongs to the methyltransferase superfamily. NTM1 family.

The catalysed reaction is N-terminal L-alanyl-L-prolyl-L-lysyl-[protein] + 3 S-adenosyl-L-methionine = N-terminal N,N,N-trimethyl-L-alanyl-L-prolyl-L-lysyl-[protein] + 3 S-adenosyl-L-homocysteine + 3 H(+). The enzyme catalyses N-terminal L-seryl-L-prolyl-L-lysyl-[protein] + 3 S-adenosyl-L-methionine = N-terminal N,N,N-trimethyl-L-seryl-L-prolyl-L-lysyl-[protein] + 3 S-adenosyl-L-homocysteine + 3 H(+). It catalyses the reaction N-terminal L-prolyl-L-prolyl-L-lysyl-[protein] + 2 S-adenosyl-L-methionine = N-terminal N,N-dimethyl-L-prolyl-L-prolyl-L-lysyl-[protein] + 2 S-adenosyl-L-homocysteine + 2 H(+). In terms of biological role, alpha-N-methyltransferase that methylates the N-terminus of target proteins containing the N-terminal motif [Ala/Pro/Ser]-Pro-Lys when the initiator Met is cleaved. Specifically catalyzes mono-, di- or tri-methylation of exposed alpha-amino group of Ala or Ser residue in the [Ala/Ser]-Pro-Lys motif and mono- or di-methylation of Pro in the Pro-Pro-Lys motif. This is Alpha N-terminal protein methyltransferase 1 from Oryza sativa subsp. indica (Rice).